The sequence spans 177 residues: MIGILNRWRQFGRRYFWPHLLLGMVAASLGVPLNLSGVPDHAALANTSSSQSRQNHGTTNFNSLALLHDIHRRLSFSVDYWQQHALRTVIRHLSFALAPQAAYARVQEVAETERVAPSKIQQLALLDTLNALLTHEFKPPAIIRYTEQVERPVLSPYKPGLWLAQVQGIRAGPANLS.

An N-terminal signal peptide occupies residues 1-37 (MIGILNRWRQFGRRYFWPHLLLGMVAASLGVPLNLSG).

The protein belongs to the SecM family.

It localises to the cytoplasm. The protein resides in the cytosol. It is found in the periplasm. Regulates secA expression by translational coupling of the secM secA operon. Translational pausing at a specific Pro residue 5 residues before the end of the protein may allow disruption of a mRNA repressor helix that normally suppresses secA translation initiation. The protein is Secretion monitor of Yersinia pestis bv. Antiqua (strain Antiqua).